We begin with the raw amino-acid sequence, 57 residues long: UPF0391 membrane protein bsl5717 (57 aa).

The next 2 helical transmembrane spans lie at 6–26 (WALI…TGIS) and 35–55 (FLFY…LTIF).

Belongs to the UPF0391 family.

It localises to the cell membrane. This is UPF0391 membrane protein bsl5717 from Bradyrhizobium diazoefficiens (strain JCM 10833 / BCRC 13528 / IAM 13628 / NBRC 14792 / USDA 110).